Consider the following 2275-residue polypeptide: Multifunctional protein pyrABCN (2275 aa).

Positions 1–440 (MPETVGHEEP…PGPRDTEYLF (440 aa)) are GATase (Glutamine amidotransferase). L-glutamine is bound by residues Ser102, Gly313, and Gly315. Residues 265–453 (RVLCLDVGLK…INAIKDTIAS (189 aa)) form the Glutamine amidotransferase type-1 domain. Residue Cys342 is the Nucleophile; for GATase activity of the active site. L-glutamine-binding residues include Leu343, Gln346, Asn384, Gly386, and Tyr387. Catalysis depends on for GATase activity residues His426 and Glu428. Residues 441 to 482 (DVFINAIKDTIASPEALQKPVNFPGGAVAENIKASPRVSVKK) are linker. Residues 483–1522 (VLILGSGGLS…TNVKNAKILI (1040 aa)) form a CPSase (Carbamoyl-phosphate synthase) region. The ATP site is built by Arg600, Arg640, Gly646, Gly647, Arg677, Met679, Glu684, Gly710, Ile711, His712, Gln753, and Glu767. ATP-grasp domains follow at residues 604-796 (ARSM…KLGL) and 1139-1330 (SRML…KAMI). Mg(2+)-binding residues include Gln753, Glu767, and Asn769. The Mn(2+) site is built by Gln753, Glu767, and Asn769. ATP is bound by residues Arg1175, Lys1214, Ile1216, Glu1221, Gly1246, Val1247, His1248, Ser1249, Gln1289, and Glu1301. Residues Gln1289, Glu1301, and Asn1303 each coordinate Mg(2+). Mn(2+)-binding residues include Gln1289, Glu1301, and Asn1303. The region spanning 1396–1575 (FKLPKRNILL…KDFEAVTKAS (180 aa)) is the MGS-like domain. The tract at residues 1523–1532 (EAIARHYALN) is linker. Residues 1533–1862 (VQTIDYQTSH…FQGKTSCLDS (330 aa)) form a defective DHOase domain region. The interval 1863 to 1882 (EITPDAPKGSDMSGHRIVPA) is disordered. The interval 1863 to 1953 (EITPDAPKGS…LQMLSRSPFK (91 aa)) is linker. Residues 1954 to 2258 (QKHVLSVNQF…EFDMLMWMQM (305 aa)) are ATCase (Aspartate transcarbamylase). Residues Arg2006 and Thr2007 each contribute to the carbamoyl phosphate site. Lys2034 provides a ligand contact to L-aspartate. Positions 2055, 2083, and 2086 each coordinate carbamoyl phosphate. The L-aspartate site is built by Arg2116 and Arg2178. Residues Leu2217 and Pro2218 each coordinate carbamoyl phosphate.

The protein in the central section; belongs to the metallo-dependent hydrolases superfamily. DHOase family. CAD subfamily. In the N-terminal section; belongs to the CarA family. It in the 2nd section; belongs to the CarB family. This sequence in the 3rd section; belongs to the metallo-dependent hydrolases superfamily. DHOase family. CAD subfamily. The protein in the C-terminal section; belongs to the aspartate/ornithine carbamoyltransferase superfamily. ATCase family. The cofactor is Mg(2+). Mn(2+) is required as a cofactor.

The catalysed reaction is hydrogencarbonate + L-glutamine + 2 ATP + H2O = carbamoyl phosphate + L-glutamate + 2 ADP + phosphate + 2 H(+). It carries out the reaction L-glutamine + H2O = L-glutamate + NH4(+). The enzyme catalyses hydrogencarbonate + NH4(+) + 2 ATP = carbamoyl phosphate + 2 ADP + phosphate + 2 H(+). It catalyses the reaction carbamoyl phosphate + L-aspartate = N-carbamoyl-L-aspartate + phosphate + H(+). Its pathway is pyrimidine metabolism; UMP biosynthesis via de novo pathway; (S)-dihydroorotate from bicarbonate: step 1/3. It participates in pyrimidine metabolism; UMP biosynthesis via de novo pathway; (S)-dihydroorotate from bicarbonate: step 2/3. In terms of biological role, multifunctional protein that encodes the first 2 enzymatic activities of the de novo pyrimidine pathway: carbamoylphosphate synthetase (CPSase; EC 6.3.5.5) and aspartate transcarbamylase (ATCase; EC 2.1.3.2). The CPSase-function is accomplished in 2 steps, by a glutamine-dependent amidotransferase activity (GATase) that binds and cleaves glutamine to produce ammonia, followed by an ammonium-dependent carbamoyl phosphate synthetase, which reacts with the ammonia, hydrogencarbonate and ATP to form carbamoyl phosphate. The endogenously produced carbamoyl phosphate is sequestered and channeled to the ATCase active site. ATCase then catalyzes the formation of carbamoyl-L-aspartate from L-aspartate and carbamoyl phosphate. The chain is Multifunctional protein pyrABCN from Emericella nidulans (strain FGSC A4 / ATCC 38163 / CBS 112.46 / NRRL 194 / M139) (Aspergillus nidulans).